The sequence spans 314 residues: Methionyl-tRNA formyltransferase (314 aa).

110-113 (SLLP) contacts (6S)-5,6,7,8-tetrahydrofolate.

The protein belongs to the Fmt family.

The enzyme catalyses L-methionyl-tRNA(fMet) + (6R)-10-formyltetrahydrofolate = N-formyl-L-methionyl-tRNA(fMet) + (6S)-5,6,7,8-tetrahydrofolate + H(+). Attaches a formyl group to the free amino group of methionyl-tRNA(fMet). The formyl group appears to play a dual role in the initiator identity of N-formylmethionyl-tRNA by promoting its recognition by IF2 and preventing the misappropriation of this tRNA by the elongation apparatus. The protein is Methionyl-tRNA formyltransferase of Bacillus cereus (strain ATCC 14579 / DSM 31 / CCUG 7414 / JCM 2152 / NBRC 15305 / NCIMB 9373 / NCTC 2599 / NRRL B-3711).